The sequence spans 264 residues: tRNA pseudouridine synthase A (264 aa).

Residue Asp-51 is the Nucleophile of the active site. Tyr-109 provides a ligand contact to substrate.

The protein belongs to the tRNA pseudouridine synthase TruA family. In terms of assembly, homodimer.

The enzyme catalyses uridine(38/39/40) in tRNA = pseudouridine(38/39/40) in tRNA. Functionally, formation of pseudouridine at positions 38, 39 and 40 in the anticodon stem and loop of transfer RNAs. The protein is tRNA pseudouridine synthase A of Actinobacillus succinogenes (strain ATCC 55618 / DSM 22257 / CCUG 43843 / 130Z).